The chain runs to 124 residues: uncharacterized protein (124 aa).

Helical transmembrane passes span 14–34 (KAIV…YGWQ), 41–61 (FSYG…IIFY), and 85–105 (MVFI…AFFV).

The protein localises to the cell membrane. This is an uncharacterized protein from Haemophilus influenzae (strain ATCC 51907 / DSM 11121 / KW20 / Rd).